Here is a 486-residue protein sequence, read N- to C-terminus: MLSLKAVLRFASVAVAVVLPTLAQAQAPEPSLSVRSPPVSYNNTLVKQRADPQILKHTNGRYYFIATVPEYDRVVMRQADSIQGLSTAEERLIWARSQSKAGVGYVWAPELHKIGDKWYIYFALGRTAPFDVRPFVLEGTGSDDPMAASWAEKGFITTDFDTFSLDATTFEVNGVRYLSWAQADPRFDNGGGTSLFLARMTNPWTIQRPSIVISRPDQPWERIGHNVNEGSWGMVRNGKVFVTYSAAATDANYCMGLLTADQNADLMNPASWSKSKDPVFVSNTATSQFGPGHSAFTVSDDNQSDVLVYHARQYKDIRGEPLDNPDRMTRVQKLYWRSDGTPDFGIPIPDGPHPVRLRSSADQTLYVGIANNAVQSVKDAPVQNTQFKIVEPGLGGSGTISFESTAQPGKYLSAANGSVSLATLSNTSDAGARSSASFRRVAGLSDATGVSFESAAQAGSYLVSGGNGAAVSVAPSTGAEATFYLE.

The signal sequence occupies residues 1-25; that stretch reads MLSLKAVLRFASVAVAVVLPTLAQA. The N-linked (GlcNAc...) asparagine glycan is linked to asparagine 42. Residues 45-342 are catalytic; the sequence is LVKQRADPQI…KLYWRSDGTP (298 aa). Aspartate 51 serves as the catalytic Proton acceptor. Catalysis depends on glutamate 229, which acts as the Proton donor. N-linked (GlcNAc...) asparagine glycosylation is found at asparagine 302, asparagine 416, and asparagine 426. Residues 359-467 form an ABD region; the sequence is SSADQTLYVG…AGSYLVSGGN (109 aa).

This sequence belongs to the glycosyl hydrolase 43 family.

It is found in the secreted. It catalyses the reaction Hydrolysis of terminal non-reducing alpha-L-arabinofuranoside residues in alpha-L-arabinosides.. Its pathway is glycan metabolism; L-arabinan degradation. Its function is as follows. Secreted arabinofuranosidase that causes degradation of rice cell wall components during infection. Required for virulence. The sequence is that of Alpha-L-arabinofuranosidase B from Pyricularia oryzae (strain 70-15 / ATCC MYA-4617 / FGSC 8958) (Rice blast fungus).